The sequence spans 482 residues: Glutamyl-tRNA(Gln) amidotransferase subunit A (482 aa).

Residues lysine 75 and serine 150 each act as charge relay system in the active site. Residue serine 174 is the Acyl-ester intermediate of the active site.

This sequence belongs to the amidase family. GatA subfamily. As to quaternary structure, heterotrimer of A, B and C subunits.

The catalysed reaction is L-glutamyl-tRNA(Gln) + L-glutamine + ATP + H2O = L-glutaminyl-tRNA(Gln) + L-glutamate + ADP + phosphate + H(+). Allows the formation of correctly charged Gln-tRNA(Gln) through the transamidation of misacylated Glu-tRNA(Gln) in organisms which lack glutaminyl-tRNA synthetase. The reaction takes place in the presence of glutamine and ATP through an activated gamma-phospho-Glu-tRNA(Gln). The protein is Glutamyl-tRNA(Gln) amidotransferase subunit A of Rippkaea orientalis (strain PCC 8801 / RF-1) (Cyanothece sp. (strain PCC 8801)).